The following is a 502-amino-acid chain: ATP synthase subunit alpha (502 aa).

A disordered region spans residues 115–136 (VDGLGPIHTTKTRPIESPAPGV). ATP is bound at residue 169 to 176 (GDRQTGKT).

It belongs to the ATPase alpha/beta chains family. As to quaternary structure, F-type ATPases have 2 components, CF(1) - the catalytic core - and CF(0) - the membrane proton channel. CF(1) has five subunits: alpha(3), beta(3), gamma(1), delta(1), epsilon(1). CF(0) has three main subunits: a(1), b(2) and c(9-12). The alpha and beta chains form an alternating ring which encloses part of the gamma chain. CF(1) is attached to CF(0) by a central stalk formed by the gamma and epsilon chains, while a peripheral stalk is formed by the delta and b chains.

The protein localises to the cell membrane. It catalyses the reaction ATP + H2O + 4 H(+)(in) = ADP + phosphate + 5 H(+)(out). Its function is as follows. Produces ATP from ADP in the presence of a proton gradient across the membrane. The alpha chain is a regulatory subunit. In Bacillus cytotoxicus (strain DSM 22905 / CIP 110041 / 391-98 / NVH 391-98), this protein is ATP synthase subunit alpha.